A 151-amino-acid chain; its full sequence is UPF0756 membrane protein lhv_0995 (151 aa).

5 helical membrane-spanning segments follow: residues 4-24 (WLFL…SLII), 25-45 (ATGV…LPVI), 52-72 (WGVT…QIGF), 78-98 (TFKS…AILS), and 115-135 (LVLG…GPVI).

This sequence belongs to the UPF0756 family.

It localises to the cell membrane. This Lactobacillus helveticus (strain DPC 4571) protein is UPF0756 membrane protein lhv_0995.